The sequence spans 49 residues: Large ribosomal subunit protein bL33B (49 aa).

This sequence belongs to the bacterial ribosomal protein bL33 family.

This chain is Large ribosomal subunit protein bL33B (rpmG2), found in Staphylococcus epidermidis (strain ATCC 12228 / FDA PCI 1200).